The following is a 512-amino-acid chain: Eukaryotic translation initiation factor 3 subunit L (512 aa).

Positions 291-477 constitute a PCI domain; sequence DAFRLFESIL…GERQFTDSVD (187 aa).

The protein belongs to the eIF-3 subunit L family. In terms of assembly, component of the eukaryotic translation initiation factor 3 (eIF-3) complex.

The protein resides in the cytoplasm. Component of the eukaryotic translation initiation factor 3 (eIF-3) complex, which is involved in protein synthesis of a specialized repertoire of mRNAs and, together with other initiation factors, stimulates binding of mRNA and methionyl-tRNAi to the 40S ribosome. The eIF-3 complex specifically targets and initiates translation of a subset of mRNAs involved in cell proliferation. The chain is Eukaryotic translation initiation factor 3 subunit L from Monosiga brevicollis (Choanoflagellate).